Here is a 121-residue protein sequence, read N- to C-terminus: Small ribosomal subunit protein uS13 (121 aa).

Residues 99 to 121 (RGQRTRTNSRTRKGPRRKIMKKK) form a disordered region. Residues 101–121 (QRTRTNSRTRKGPRRKIMKKK) show a composition bias toward basic residues.

It belongs to the universal ribosomal protein uS13 family. In terms of assembly, part of the 30S ribosomal subunit. Forms a loose heterodimer with protein S19. Forms two bridges to the 50S subunit in the 70S ribosome.

Located at the top of the head of the 30S subunit, it contacts several helices of the 16S rRNA. In the 70S ribosome it contacts the 23S rRNA (bridge B1a) and protein L5 of the 50S subunit (bridge B1b), connecting the 2 subunits; these bridges are implicated in subunit movement. Contacts the tRNAs in the A and P-sites. The protein is Small ribosomal subunit protein uS13 of Thermodesulfovibrio yellowstonii (strain ATCC 51303 / DSM 11347 / YP87).